The chain runs to 97 residues: MAHKKGVGSSRNGRDSNPKYRGIKKYGGEFVTAGNIILRQCGTKWHPGSNVGMGTDYTIYSLVDGVVQFAHKSKKAYKVNVVPVEYVEVEIEEVVEA.

A disordered region spans residues 1 to 21 (MAHKKGVGSSRNGRDSNPKYR).

It belongs to the bacterial ribosomal protein bL27 family.

This is Large ribosomal subunit protein bL27 from Gemmatimonas aurantiaca (strain DSM 14586 / JCM 11422 / NBRC 100505 / T-27).